A 420-amino-acid polypeptide reads, in one-letter code: Calsequestrin-1 (420 aa).

An N-terminal signal peptide occupies residues 1 to 22 (MKGPWLVLAALCLSLANLGPRG). The N-linked (GlcNAc...) asparagine glycan is linked to asparagine 338. The tract at residues 369–420 (LEGEVNTEDDDDDDDDDDDDDDDDDDDDDDDDDDDDDDDDDDDDDDDDDDDD) is disordered.

The protein belongs to the calsequestrin family. Monomer; increases in response to a depletion of intracellular calcium. Homodimer. Homotetramer and homopolymer. Can form linear homooligomers. Ca(2+) ions promote oligomerization. In terms of tissue distribution, detected in skeletal muscle (at protein level). Detected in skeletal muscle.

The protein resides in the endoplasmic reticulum. It is found in the sarcoplasmic reticulum. The protein localises to the sarcoplasmic reticulum lumen. Its subcellular location is the sarcoplasmic reticulum membrane. It localises to the mitochondrion matrix. In terms of biological role, calsequestrin is a high-capacity, moderate affinity, calcium-binding protein and thus acts as an internal calcium store in muscle. Calcium ions are bound by clusters of acidic residues at the protein surface, often at the interface between subunits. Can bind around 80 Ca(2+) ions. Regulates the release of lumenal Ca(2+) via the calcium release channel RYR1; this plays an important role in triggering muscle contraction. Negatively regulates store-operated Ca(2+) entry (SOCE) activity. The protein is Calsequestrin-1 of Pelophylax lessonae (Pool frog).